The sequence spans 705 residues: 1,4-alpha-glucan branching enzyme GlgB (705 aa).

Catalysis depends on Asp309, which acts as the Nucleophile. Glu360 functions as the Proton donor in the catalytic mechanism. The segment at 654–705 is disordered; it reads VQVERAADPRPNEQQRLVAETPAHEGGRSAPADAAESAEQKPDDEQKGGKKA. Residues 691 to 705 show a composition bias toward basic and acidic residues; that stretch reads AEQKPDDEQKGGKKA.

The protein belongs to the glycosyl hydrolase 13 family. GlgB subfamily. As to quaternary structure, monomer.

The catalysed reaction is Transfers a segment of a (1-&gt;4)-alpha-D-glucan chain to a primary hydroxy group in a similar glucan chain.. The protein operates within glycan biosynthesis; glycogen biosynthesis. In terms of biological role, catalyzes the formation of the alpha-1,6-glucosidic linkages in glycogen by scission of a 1,4-alpha-linked oligosaccharide from growing alpha-1,4-glucan chains and the subsequent attachment of the oligosaccharide to the alpha-1,6 position. In Deinococcus radiodurans (strain ATCC 13939 / DSM 20539 / JCM 16871 / CCUG 27074 / LMG 4051 / NBRC 15346 / NCIMB 9279 / VKM B-1422 / R1), this protein is 1,4-alpha-glucan branching enzyme GlgB.